We begin with the raw amino-acid sequence, 596 residues long: Aspartate--tRNA(Asp/Asn) ligase (596 aa).

E175 provides a ligand contact to L-aspartate. The aspartate stretch occupies residues 199–202 (QQYK). 2 residues coordinate L-aspartate: R221 and H454. 221–223 (RDE) lines the ATP pocket. An ATP-binding site is contributed by E488. L-aspartate is bound at residue R495. 540 to 543 (GIDR) is an ATP binding site.

Belongs to the class-II aminoacyl-tRNA synthetase family. Type 1 subfamily. In terms of assembly, homodimer.

Its subcellular location is the cytoplasm. It catalyses the reaction tRNA(Asx) + L-aspartate + ATP = L-aspartyl-tRNA(Asx) + AMP + diphosphate. In terms of biological role, aspartyl-tRNA synthetase with relaxed tRNA specificity since it is able to aspartylate not only its cognate tRNA(Asp) but also tRNA(Asn). Reaction proceeds in two steps: L-aspartate is first activated by ATP to form Asp-AMP and then transferred to the acceptor end of tRNA(Asp/Asn). This Rhizobium johnstonii (strain DSM 114642 / LMG 32736 / 3841) (Rhizobium leguminosarum bv. viciae) protein is Aspartate--tRNA(Asp/Asn) ligase.